A 654-amino-acid polypeptide reads, in one-letter code: Coiled-coil domain-containing protein 30 (654 aa).

The tract at residues 38-65 (TLESRRDPNSSLQKEFPQHQDEDQSRAA) is disordered. Positions 53 to 62 (FPQHQDEDQS) are enriched in basic and acidic residues. 2 coiled-coil regions span residues 97-244 (REER…LDNA) and 276-559 (KSQQ…QIIR). A disordered region spans residues 614 to 654 (AAAIPKSPEPLSRSQDSESGYINVTSLKETHNTQGDQKPEL). The segment covering 625 to 654 (SRSQDSESGYINVTSLKETHNTQGDQKPEL) has biased composition (polar residues).

This sequence belongs to the prefoldin subunit beta family.

The protein is Coiled-coil domain-containing protein 30 (Ccdc30) of Mus musculus (Mouse).